Reading from the N-terminus, the 729-residue chain is Receptor-like protein 2 (729 aa).

The first 44 residues, 1–44 (MRSKAKGLVRPLITKPVQPLSSHMHLFLLCILFLSALFLTLSEA), serve as a signal peptide directing secretion. The interval 45–82 (VCNLQDRESLIWFSGNVSSSVSPLNWNLSIDCCSWEGI) is N-cap. Topologically, residues 45–707 (VCNLQDRESL…AKENDELNRT (663 aa)) are extracellular. Residues Asn60 and Asn71 are each glycosylated (N-linked (GlcNAc...) asparagine). LRR repeat units follow at residues 89–113 (DSHVTVISLPSRGLSGTLASSVQNI), 114–137 (HRLSRLDLSYNRLSGPLPPGFFST), 139–163 (DQLMILNLSYNSFNGELPLEQAFGN), 168–193 (FFSIQTLDLSSNLLEGEILRSSVYLQ), 195–219 (TINLISFNVSNNSFTGPIPSFMCRS), 220–244 (SPQLSKLDFSYNDFSGHISQELGRC), 245–268 (LRLTVLQAGFNNLSGVIPSEIYNL), 269–292 (SELEQLFLPANQLTGKIDNNITRL), 293–316 (RKLTSLALYSNHLEGEIPMDIGNL), 317–340 (SSLRSLQLHINNINGTVPLSLANC), 342–364 (KLVKLNLRVNQLGGGLTELEFSQ), 365–389 (LQSLKVLDLGNNSFTGALPDKIFSC), 391–413 (SLTAIRFAGNKLTGEISPQVLEL), 414–437 (ESLSFMGLSDNKLTNITGALSILQ), 439–464 (CRKLSTLILAKNFYDETVPSKEDFLS), 468–492 (FPKLRIFGVGACRLRGEIPAWLINL), 493–515 (NKVEVMDLSMNRFVGSIPGWLGT), 516–540 (LPDLFYLDLSDNLLTGELPKELFQL), 542–560 (ALMSQKITENNYLELPIFL), and 561–584 (NPNNVTTNQQYNKLYSFPPTIYIR). N-linked (GlcNAc...) asparagine glycans are attached at residues Asn145 and Asn163. 2 N-linked (GlcNAc...) asparagine glycosylation sites follow: Asn202 and Asn205. N-linked (GlcNAc...) asparagine glycans are attached at residues Asn256, Asn267, Asn288, Asn315, Asn330, and Asn339. Asn375 carries N-linked (GlcNAc...) asparagine glycosylation. Residue Asn428 is glycosylated (N-linked (GlcNAc...) asparagine). N-linked (GlcNAc...) asparagine glycosylation is found at Asn564, Asn587, Asn611, Asn622, Asn635, Asn657, and Asn705. LRR repeat units follow at residues 599–623 (LKVLHILELLGNNLSGSIPDELSNL), 624–647 (TNLERLDLSNNNLSGSIPWSLTNL), and 649–672 (FLSYFNVANNSLEGPIPSEGQFDT). Residues 690–707 (LTSCKPTRAKENDELNRT) form a C-cap/acidic domain region. A helical membrane pass occupies residues 708–728 (FLMGIAIGYFLSFVSILVVRA). Position 729 (Trp729) is a topological domain, cytoplasmic.

This sequence belongs to the RLP family.

It localises to the cell membrane. In terms of biological role, involved in the perception of CLV3 and CLV3-like peptides, that act as extracellular signals regulating meristems maintenance. This Arabidopsis thaliana (Mouse-ear cress) protein is Receptor-like protein 2.